We begin with the raw amino-acid sequence, 221 residues long: MWGASRGRVAGPTLLGLLLALSVRSGGASKASAGLVTCGSVLKLLNTHHKVRLHSHDIKYGSGSGQQSVTGVEESDDANSYWRIRGGSEGGCPRGLPVRCGQAVRLTHVLTGKNLHTHHFPSPLSNNQEVSAFGEDGEGDDLDLWTVRCSGQHWEREASVRFQHVGTSVFLSVTGEQYGNPIRGQHEVHGMPSANAHNTWKAMEGIFIKPGADLSTGHDEL.

A signal peptide spans 1–28 (MWGASRGRVAGPTLLGLLLALSVRSGGA). MIR domains lie at 33-87 (AGLV…IRGG), 95-150 (GLPV…VRCS), and 151-205 (GQHW…AMEG). S215 carries the phosphoserine modification. The short motif at 218–221 (HDEL) is the Prevents secretion from ER element.

As to expression, ubiquitously expressed with high expression in the testis, ovary, uterus, and low expression in heart and skeletal muscle.

It is found in the endoplasmic reticulum lumen. This Mus musculus (Mouse) protein is Stromal cell-derived factor 2-like protein 1 (Sdf2l1).